The following is a 434-amino-acid chain: Trigger factor (434 aa).

The PPIase FKBP-type domain maps to 161-246 (EDRATLDFTG…LKKVEVRELP (86 aa)).

Belongs to the FKBP-type PPIase family. Tig subfamily.

It is found in the cytoplasm. It catalyses the reaction [protein]-peptidylproline (omega=180) = [protein]-peptidylproline (omega=0). Functionally, involved in protein export. Acts as a chaperone by maintaining the newly synthesized protein in an open conformation. Functions as a peptidyl-prolyl cis-trans isomerase. The chain is Trigger factor from Yersinia enterocolitica serotype O:8 / biotype 1B (strain NCTC 13174 / 8081).